The primary structure comprises 274 residues: MNKTAIALLALLASSASLAATPWQKITQPVPGSAQSIGSFSNGCIVGADTLPIQSEHYQVMRTDQRRYFGHPDLVMFIQRLSSQVSNLGMGTVLIGDMGMPAGGRFNGGHASHQTGLDVDIFLQLPKTRWTSAQLLRPQALDLVSRDGKHVVSTLWKPEIFSLIKLAAQDKDVTRIFVNPAIKQQLCLDAGTDRDWLRKVRPWFQHRAHMHVRLRCPADSLECEDQPLPPPGDGCGAELQSWFAPPKPGTTKPEKKTPSPLPPSCQALLDEHVI.

The N-terminal stretch at 1-19 (MNKTAIALLALLASSASLA) is a signal peptide. 3 disulfide bridges follow: cysteine 44–cysteine 265, cysteine 187–cysteine 235, and cysteine 216–cysteine 223. Zn(2+) contacts are provided by histidine 110, histidine 113, aspartate 120, aspartate 147, histidine 150, and histidine 211. Residues 228 to 264 (LPPPGDGCGAELQSWFAPPKPGTTKPEKKTPSPLPPS) are disordered.

Belongs to the peptidase M74 family. As to quaternary structure, dimer. Zn(2+) serves as cofactor.

It is found in the periplasm. In terms of biological role, murein endopeptidase that cleaves the D-alanyl-meso-2,6-diamino-pimelyl amide bond that connects peptidoglycan strands. Likely plays a role in the removal of murein from the sacculus. This is Penicillin-insensitive murein endopeptidase from Escherichia coli (strain 55989 / EAEC).